Reading from the N-terminus, the 184-residue chain is uncharacterized protein (184 aa).

This is an uncharacterized protein from Methanocaldococcus jannaschii (strain ATCC 43067 / DSM 2661 / JAL-1 / JCM 10045 / NBRC 100440) (Methanococcus jannaschii).